The following is a 185-amino-acid chain: Superoxide dismutase [Cu-Zn] (185 aa).

Residues 1–18 form the signal peptide; it reads MTAFYKLCGMSMLSLVLA. Cu cation is bound by residues His-85, His-87, and His-102. A disulfide bridge links Cys-92 with Cys-180. Zn(2+) is bound by residues His-102, His-111, His-120, and Asp-123. His-158 contacts Cu cation.

Belongs to the Cu-Zn superoxide dismutase family. As to quaternary structure, homodimer. It depends on Cu cation as a cofactor. Zn(2+) serves as cofactor.

It is found in the periplasm. It carries out the reaction 2 superoxide + 2 H(+) = H2O2 + O2. Its function is as follows. Destroys radicals which are normally produced within the cells and which are toxic to biological systems. The protein is Superoxide dismutase [Cu-Zn] (sodC) of Francisella tularensis subsp. holarctica (strain LVS).